We begin with the raw amino-acid sequence, 361 residues long: Large ribosomal subunit protein mL45 (361 aa).

This sequence belongs to the mitochondrion-specific ribosomal protein mL45 family.

It is found in the mitochondrion. This Caenorhabditis briggsae protein is Large ribosomal subunit protein mL45 (mrpl-45).